The chain runs to 122 residues: Ribosomal protein eL22-like (122 aa).

Residues Ser112, Ser118, and Ser120 each carry the phosphoserine modification.

Belongs to the eukaryotic ribosomal protein eL22 family.

This chain is Ribosomal protein eL22-like (RPL22L1), found in Bos taurus (Bovine).